The chain runs to 869 residues: 1-phosphatidylinositol 4,5-bisphosphate phosphodiesterase 1 (869 aa).

One can recognise an EF-hand domain in the interval 269-304; sequence VSTGQLLEFFQLADINHNGLLNYFEFEKFIKILKNR. The Ca(2+) site is built by aspartate 282, asparagine 284, asparagine 286, and glutamate 293. A PI-PLC X-box domain is found at 382–520; that stretch reads YSKPLNHYFI…LKHKILLKSK (139 aa). Residues histidine 395 and histidine 439 contribute to the active site. Substrate-binding residues include lysine 518 and lysine 520. The disordered stretch occupies residues 546–571; it reads ANEQELRMKDDSTNSSSATNSSSMQR. Low complexity predominate over residues 558 to 568; sequence TNSSSATNSSS. Residues 590–709 form the PI-PLC Y-box domain; sequence ISGIHGIKFR…SGYVLKPKKL (120 aa). Substrate contacts are provided by serine 614 and arginine 643. One can recognise a C2 domain in the interval 713–862; sequence VTKAKMIPLI…EGEQYIFCTL (150 aa).

As to quaternary structure, interacts with SGD1. Requires Ca(2+) as cofactor.

It carries out the reaction a 1,2-diacyl-sn-glycero-3-phospho-(1D-myo-inositol-4,5-bisphosphate) + H2O = 1D-myo-inositol 1,4,5-trisphosphate + a 1,2-diacyl-sn-glycerol + H(+). Its function is as follows. The production of the second messenger molecules diacylglycerol (DAG) and inositol 1,4,5-trisphosphate (IP3) is mediated by activated phosphatidylinositol-specific phospholipase C enzymes. Required for cell growth, osmoresistance and expression of GPD1. The chain is 1-phosphatidylinositol 4,5-bisphosphate phosphodiesterase 1 (PLC1) from Saccharomyces cerevisiae (strain ATCC 204508 / S288c) (Baker's yeast).